We begin with the raw amino-acid sequence, 887 residues long: DNA gyrase subunit A (887 aa).

Positions 35–501 (LPDVRDGLKP…GFEDLEDEDL (467 aa)) constitute a Topo IIA-type catalytic domain. The active-site O-(5'-phospho-DNA)-tyrosine intermediate is Tyr123. A GyrA-box motif is present at residues 528-534 (QNRGGRG). The disordered stretch occupies residues 811–865 (KEDAEDETNEDEQSTSTVSEDGTEQQREAVVNDETPGNAIHTEVIDSEENDEDGR). Residues 813–823 (DAEDETNEDEQ) are compositionally biased toward acidic residues.

This sequence belongs to the type II topoisomerase GyrA/ParC subunit family. Heterotetramer, composed of two GyrA and two GyrB chains. In the heterotetramer, GyrA contains the active site tyrosine that forms a transient covalent intermediate with DNA, while GyrB binds cofactors and catalyzes ATP hydrolysis.

It is found in the cytoplasm. The enzyme catalyses ATP-dependent breakage, passage and rejoining of double-stranded DNA.. Its function is as follows. A type II topoisomerase that negatively supercoils closed circular double-stranded (ds) DNA in an ATP-dependent manner to modulate DNA topology and maintain chromosomes in an underwound state. Negative supercoiling favors strand separation, and DNA replication, transcription, recombination and repair, all of which involve strand separation. Also able to catalyze the interconversion of other topological isomers of dsDNA rings, including catenanes and knotted rings. Type II topoisomerases break and join 2 DNA strands simultaneously in an ATP-dependent manner. The polypeptide is DNA gyrase subunit A (Staphylococcus aureus (strain MSSA476)).